Here is a 549-residue protein sequence, read N- to C-terminus: Probable protein kinase UbiB (549 aa).

Residues 123-501 (DFDETPLASA…QQQAHKSNYL (379 aa)) form the Protein kinase domain. ATP is bound by residues 129–137 (LASASISQV) and lysine 152. The Proton acceptor role is filled by aspartate 287. The next 2 membrane-spanning stretches (helical) occupy residues 498–518 (SNYL…LFNQ) and 520–540 (ATLW…IIGW).

It belongs to the ABC1 family. UbiB subfamily.

It localises to the cell inner membrane. The protein operates within cofactor biosynthesis; ubiquinone biosynthesis [regulation]. Is probably a protein kinase regulator of UbiI activity which is involved in aerobic coenzyme Q (ubiquinone) biosynthesis. In Shewanella sp. (strain ANA-3), this protein is Probable protein kinase UbiB.